The following is a 387-amino-acid chain: GTPase Obg (387 aa).

The Obg domain maps to 1-159 (MKFVDEAVIR…RSLRLELMLL (159 aa)). The OBG-type G domain occupies 160 to 333 (ADVGLLGMPN…LALKLMDFID (174 aa)). GTP contacts are provided by residues 166–173 (GMPNAGKS), 191–195 (FTTLV), 213–216 (DIPG), 283–286 (NKTD), and 314–316 (SAY). Ser173 and Thr193 together coordinate Mg(2+).

The protein belongs to the TRAFAC class OBG-HflX-like GTPase superfamily. OBG GTPase family. Monomer. Requires Mg(2+) as cofactor.

It localises to the cytoplasm. Functionally, an essential GTPase which binds GTP, GDP and possibly (p)ppGpp with moderate affinity, with high nucleotide exchange rates and a fairly low GTP hydrolysis rate. Plays a role in control of the cell cycle, stress response, ribosome biogenesis and in those bacteria that undergo differentiation, in morphogenesis control. The polypeptide is GTPase Obg (Shewanella loihica (strain ATCC BAA-1088 / PV-4)).